A 261-amino-acid chain; its full sequence is Ribosomal RNA large subunit methyltransferase E (261 aa).

Gly-81, Trp-83, Asp-104, Asp-120, and Asp-144 together coordinate S-adenosyl-L-methionine. The active-site Proton acceptor is Lys-184. The segment at 233-261 (GNALGHEVEDDGPMPHDPREDATADEDQD) is disordered. The span at 245 to 254 (PMPHDPREDA) shows a compositional bias: basic and acidic residues.

Belongs to the class I-like SAM-binding methyltransferase superfamily. RNA methyltransferase RlmE family.

The protein localises to the cytoplasm. The catalysed reaction is uridine(2552) in 23S rRNA + S-adenosyl-L-methionine = 2'-O-methyluridine(2552) in 23S rRNA + S-adenosyl-L-homocysteine + H(+). Its function is as follows. Specifically methylates the uridine in position 2552 of 23S rRNA at the 2'-O position of the ribose in the fully assembled 50S ribosomal subunit. This chain is Ribosomal RNA large subunit methyltransferase E, found in Allorhizobium ampelinum (strain ATCC BAA-846 / DSM 112012 / S4) (Agrobacterium vitis (strain S4)).